Here is a 312-residue protein sequence, read N- to C-terminus: Olfactory receptor 52A1 (312 aa).

The Extracellular portion of the chain corresponds to 1-27 (MSISNITVYMPSVLTLVGIPGLESVQC). N-linked (GlcNAc...) asparagine glycosylation is present at Asn-5. The chain crosses the membrane as a helical span at residues 28–48 (WIGIPFCAIYLIAMIGNSLLL). Residues 49–56 (SIIKSERS) lie on the Cytoplasmic side of the membrane. The chain crosses the membrane as a helical span at residues 57–77 (LHEPLYIFLGMLGATDIALAS). The Extracellular portion of the chain corresponds to 78–101 (SIMPKMLGIFWFNVPEIYFDSCLL). Cys-99 and Cys-182 are joined by a disulfide. A helical transmembrane segment spans residues 102–122 (QMWFIHTLQGIESGILVAMAL). Residues 123 to 141 (DRYVAICYPLRHANIFTHQ) are Cytoplasmic-facing. A helical transmembrane segment spans residues 142 to 162 (LVIQIGTMVVLRAAILVAPCL). Residues 163–199 (VLIKCRFQFYHTTVISHSYCEHMAIVKLAAANVQVNK) lie on the Extracellular side of the membrane. The helical transmembrane segment at 200-220 (IYGLFVAFTVAGFDLTFITLS) threads the bilayer. The Cytoplasmic segment spans residues 221–240 (YIQIFITVFRLPQKEARFKA). Residues 241–261 (FNTCIAHICVFLQFYLLAFFS) form a helical membrane-spanning segment. At 262–276 (FFTHRFGSHISPYIH) the chain is on the extracellular side. The helical transmembrane segment at 277 to 297 (ILFSSIYLLVPPFLNPLVYGA) threads the bilayer. Over 298 to 312 (KTTQIRIHVVKMFCS) the chain is Cytoplasmic.

Belongs to the G-protein coupled receptor 1 family.

It localises to the cell membrane. Odorant receptor. This is Olfactory receptor 52A1 (OR52A1) from Homo sapiens (Human).